Reading from the N-terminus, the 56-residue chain is Small ribosomal subunit protein uS14 (56 aa).

4 residues coordinate Zn(2+): C21, C24, C39, and C42.

The protein belongs to the universal ribosomal protein uS14 family. The cofactor is Zn(2+).

The protein is Small ribosomal subunit protein uS14 (RPS29) of Candida glabrata (strain ATCC 2001 / BCRC 20586 / JCM 3761 / NBRC 0622 / NRRL Y-65 / CBS 138) (Yeast).